Here is a 378-residue protein sequence, read N- to C-terminus: Prolargin (378 aa).

An N-terminal signal peptide occupies residues 1–21 (MRASFFWLLPLLLILASVAQG). The segment at 22 to 62 (QPTRPKPGIRRKPKPRPTPRFPQAPEPAEPTDLPPPLPPGP) is disordered. Residues 28 to 38 (PGIRRKPKPRP) are compositionally biased toward basic residues. A compositionally biased stretch (pro residues) spans 39-62 (TPRFPQAPEPAEPTDLPPPLPPGP). LRR repeat units follow at residues 91 to 110 (RRVPVIPPRIHYLYLQNNFI), 111 to 134 (TELPLESFQNATGLRWVNLDNNRI), 135 to 158 (RKVDQRVLGKLPSLAFLYMEKNQL), 159 to 179 (EEVPSALPRNLEQLRLSQNLI), 180 to 203 (SRIPPGVFSKLENLLLLDLQHNRL), 204 to 229 (SDGVFKADTFQGLKNLMQLNLAHNIL), 230 to 250 (RKMPPKVPQAIHQLYLDSNKI), 251 to 274 (ETIPNGYFKDFPNLAFIRMNYNKL), 275 to 299 (SDRGLPKNSFNISNLLVLHLSHNKI), 300 to 319 (SNVPAISNKLEHLYLNNNSI), 320 to 358 (EKINGTQICPNNLVAFHDFSSDLENVPHLRYLRLDGNFL), and 359 to 378 (KPPIPLDLMMCFRLLQSVVI). An N-linked (GlcNAc...) asparagine glycan is attached at Asn-120. N-linked (GlcNAc...) asparagine glycosylation is found at Asn-285, Asn-316, and Asn-323. A disulfide bridge connects residues Cys-328 and Cys-369.

The protein belongs to the small leucine-rich proteoglycan (SLRP) family. SLRP class II subfamily. In terms of assembly, binds the basement membrane heparan sulfate proteoglycan perlecan and triple helical collagens type I and type II. In terms of processing, glycosylated; contains heparan sulfate. As to expression, expressed in cartilage throughout both fetal development and postnatal life. It is also expressed in the developing embryo prior to skeletogenesis. In adult, highest expression in lung, lower levels in cardiac and skeletal muscle.

It is found in the secreted. The protein localises to the extracellular space. It localises to the extracellular matrix. May anchor basement membranes to the underlying connective tissue. This chain is Prolargin (Prelp), found in Mus musculus (Mouse).